A 339-amino-acid polypeptide reads, in one-letter code: Ferredoxin--NADP reductase (339 aa).

Residues D32, Q40, Y45, V85, F120, D287, and T327 each contribute to the FAD site.

This sequence belongs to the ferredoxin--NADP reductase type 2 family. As to quaternary structure, homodimer. Requires FAD as cofactor.

It catalyses the reaction 2 reduced [2Fe-2S]-[ferredoxin] + NADP(+) + H(+) = 2 oxidized [2Fe-2S]-[ferredoxin] + NADPH. The sequence is that of Ferredoxin--NADP reductase from Wolbachia sp. subsp. Brugia malayi (strain TRS).